We begin with the raw amino-acid sequence, 270 residues long: Protein tonB2 (270 aa).

Residues 1–51 are Cytoplasmic-facing; it reads MATPQPVDARTQPWRETPGGDLVALGRPVRQALHLVRHNPAQGRVLSRRET. The helical transmembrane segment at 52–69 threads the bilayer; that stretch reads ILLVLFALTLHGAVIHWL. The Periplasmic portion of the chain corresponds to 70–270; sequence SQQRTPALPE…VSVPIDFKLN (201 aa). The segment at 80 to 187 is disordered; the sequence is VPPQVPPMTI…LTPPSANAGY (108 aa). Residues 94-118 are compositionally biased toward pro residues; it reads PAPPVVEPPPPEPLPPVVEEPPPPV. Residues 133–143 are compositionally biased toward basic residues; the sequence is PKPKPKPKPQP. A compositionally biased stretch (pro residues) spans 144 to 180; it reads RPKPAPKAVEPAPPAPPQPAAPPAPPAPAAAPAPLTP. Residues 180–270 form the TonB C-terminal domain; that stretch reads PPSANAGYLH…VSVPIDFKLN (91 aa).

This sequence belongs to the TonB family. As to quaternary structure, homodimer. Forms a complex with the accessory proteins ExbB and ExbD.

It localises to the cell inner membrane. Its function is as follows. Interacts with outer membrane receptor proteins that carry out high-affinity binding and energy dependent uptake into the periplasmic space of specific substrates. It could act to transduce energy from the cytoplasmic membrane to specific energy-requiring processes in the outer membrane, resulting in the release into the periplasm of ligands bound by these outer membrane proteins. In Pseudomonas aeruginosa (strain ATCC 15692 / DSM 22644 / CIP 104116 / JCM 14847 / LMG 12228 / 1C / PRS 101 / PAO1), this protein is Protein tonB2 (tonB2).